Reading from the N-terminus, the 311-residue chain is Putative S-adenosyl-L-methionine-dependent methyltransferase MRA_0152 (311 aa).

S-adenosyl-L-methionine is bound by residues Asp-135 and 164–165; that span reads DL.

Belongs to the UPF0677 family.

In terms of biological role, exhibits S-adenosyl-L-methionine-dependent methyltransferase activity. This Mycobacterium tuberculosis (strain ATCC 25177 / H37Ra) protein is Putative S-adenosyl-L-methionine-dependent methyltransferase MRA_0152.